The sequence spans 411 residues: Aspartate kinase (411 aa).

An ACT domain is found at 265-348 (LTIRGVPDTP…KIAKVSIVGV (84 aa)).

The protein belongs to the aspartokinase family.

The protein resides in the cytoplasm. It catalyses the reaction L-aspartate + ATP = 4-phospho-L-aspartate + ADP. Its pathway is amino-acid biosynthesis; L-lysine biosynthesis via DAP pathway; (S)-tetrahydrodipicolinate from L-aspartate: step 1/4. The protein operates within amino-acid biosynthesis; L-methionine biosynthesis via de novo pathway; L-homoserine from L-aspartate: step 1/3. It participates in amino-acid biosynthesis; L-threonine biosynthesis; L-threonine from L-aspartate: step 1/5. Allosterically feedback inhibited by L-lysine and L-threonine individually and also subject to a concerted feedback inhibition by these amino acids. In terms of biological role, involved in the biosynthesis of L-aspartate-beta-semialdehyde which is a central intermediate in the biosynthesis of different amino acids (L-lysine, L-methionine, L-threonine). Catalyzes the phosphorylation of the beta-carboxyl group of L-aspartate to yield 4-phospho-L-aspartate. This Pseudomonas putida (strain ATCC 47054 / DSM 6125 / CFBP 8728 / NCIMB 11950 / KT2440) protein is Aspartate kinase.